Reading from the N-terminus, the 513-residue chain is Na(+)/H(+) antiporter NhaB (513 aa).

11 helical membrane-spanning segments follow: residues 21–41 (ITIVLFLIINPIIFFFISPFI), 88–108 (IIANFEVILLLIFMVAGIYFM), 119–139 (LLLSIRSKMVLSLAFCLSAAF), 143–163 (FLDALTVVAVIISVGMGFYGV), 208–228 (VGTALGGVMTMVGEPQNLIIA), 247–267 (LPVLICGLVTCFLVEKFGVFG), 303–323 (ALIGIWLVVGLAFHLAAVGII), 357–377 (LVVFFSVVAVIIDQHLFAPII), 389–409 (LALFYIFNGLLSAISDNVFVA), 447–467 (ATPNGQAAFLFLLTSSLAPLI), and 477–497 (MALPYTIVLSCIGLLAVEYIL).

This sequence belongs to the NhaB Na(+)/H(+) (TC 2.A.34) antiporter family.

Its subcellular location is the cell inner membrane. It catalyses the reaction 2 Na(+)(in) + 3 H(+)(out) = 2 Na(+)(out) + 3 H(+)(in). Its function is as follows. Na(+)/H(+) antiporter that extrudes sodium in exchange for external protons. The polypeptide is Na(+)/H(+) antiporter NhaB (Pasteurella multocida (strain Pm70)).